A 293-amino-acid chain; its full sequence is Phosphatidylserine decarboxylase proenzyme (293 aa).

Catalysis depends on charge relay system; for autoendoproteolytic cleavage activity residues aspartate 90, histidine 147, and serine 254. The Schiff-base intermediate with substrate; via pyruvic acid; for decarboxylase activity role is filled by serine 254. Serine 254 carries the pyruvic acid (Ser); by autocatalysis modification.

This sequence belongs to the phosphatidylserine decarboxylase family. PSD-B subfamily. Prokaryotic type I sub-subfamily. Heterodimer of a large membrane-associated beta subunit and a small pyruvoyl-containing alpha subunit. It depends on pyruvate as a cofactor. In terms of processing, is synthesized initially as an inactive proenzyme. Formation of the active enzyme involves a self-maturation process in which the active site pyruvoyl group is generated from an internal serine residue via an autocatalytic post-translational modification. Two non-identical subunits are generated from the proenzyme in this reaction, and the pyruvate is formed at the N-terminus of the alpha chain, which is derived from the carboxyl end of the proenzyme. The autoendoproteolytic cleavage occurs by a canonical serine protease mechanism, in which the side chain hydroxyl group of the serine supplies its oxygen atom to form the C-terminus of the beta chain, while the remainder of the serine residue undergoes an oxidative deamination to produce ammonia and the pyruvoyl prosthetic group on the alpha chain. During this reaction, the Ser that is part of the protease active site of the proenzyme becomes the pyruvoyl prosthetic group, which constitutes an essential element of the active site of the mature decarboxylase.

It is found in the cell membrane. The enzyme catalyses a 1,2-diacyl-sn-glycero-3-phospho-L-serine + H(+) = a 1,2-diacyl-sn-glycero-3-phosphoethanolamine + CO2. It participates in phospholipid metabolism; phosphatidylethanolamine biosynthesis; phosphatidylethanolamine from CDP-diacylglycerol: step 2/2. Functionally, catalyzes the formation of phosphatidylethanolamine (PtdEtn) from phosphatidylserine (PtdSer). This is Phosphatidylserine decarboxylase proenzyme from Yersinia pseudotuberculosis serotype O:1b (strain IP 31758).